The primary structure comprises 225 residues: Uracil-DNA glycosylase (225 aa).

Catalysis depends on aspartate 65, which acts as the Proton acceptor.

This sequence belongs to the uracil-DNA glycosylase (UDG) superfamily. UNG family.

It localises to the cytoplasm. The enzyme catalyses Hydrolyzes single-stranded DNA or mismatched double-stranded DNA and polynucleotides, releasing free uracil.. Excises uracil residues from the DNA which can arise as a result of misincorporation of dUMP residues by DNA polymerase or due to deamination of cytosine. The sequence is that of Uracil-DNA glycosylase from Bacillus licheniformis (strain ATCC 14580 / DSM 13 / JCM 2505 / CCUG 7422 / NBRC 12200 / NCIMB 9375 / NCTC 10341 / NRRL NRS-1264 / Gibson 46).